We begin with the raw amino-acid sequence, 320 residues long: Bifunctional phosphoglucose/phosphomannose isomerase (320 aa).

The SIS domain maps to 20-153 (IAKDLTPYKG…NLLGVDKDEL (134 aa)). D-fructose 6-phosphate is bound by residues Gly-37, Ser-38, Ser-80, Ser-82, Thr-85, and Arg-132. Glu-204 acts as the Proton acceptor in catalysis. D-fructose 6-phosphate is bound by residues His-220 and Lys-313. The active-site Proton donor is His-220. Catalysis depends on Lys-313, which acts as the Proton acceptor.

It belongs to the PGI/PMI family. As to quaternary structure, homodimer.

It carries out the reaction alpha-D-glucose 6-phosphate = beta-D-fructose 6-phosphate. The catalysed reaction is D-mannose 6-phosphate = D-fructose 6-phosphate. Its function is as follows. Dual specificity isomerase that catalyzes the isomerization of both glucose-6-phosphate and mannose-6-phosphate to fructose-6-phosphate. The protein is Bifunctional phosphoglucose/phosphomannose isomerase of Aquifex aeolicus (strain VF5).